A 190-amino-acid chain; its full sequence is METETKTLPLENASILSEGSLQEGHRLWIGNLDPKITEYHLLKLLQKFGKVKQFDFLFHKSGALEGQPRGYCFVNFETKQEAEQAIQCLNGKLALSKKLVVRWAHAQVKRYDHNKNDKILPISLEPSSSTEPAQSNLSVTAKIKAIEAKLKMMAENPDAEYPAAPVYSYFKPPDKKRTTPYSRTAWKSRR.

The RRM domain occupies 25–106; the sequence is HRLWIGNLDP…KKLVVRWAHA (82 aa). Positions 166-190 are disordered; sequence VYSYFKPPDKKRTTPYSRTAWKSRR.

The chain is Probable RNA-binding protein 18 (Rbm18) from Mus musculus (Mouse).